The following is a 60-amino-acid chain: Potassium channel toxin alpha-KTx 12.7 (60 aa).

Residues 1 to 22 form the signal peptide; it reads MSNMPVLIITLLLFSMYISTAA. 3 disulfides stabilise this stretch: Cys-30–Cys-51, Cys-36–Cys-56, and Cys-40–Cys-58.

This sequence belongs to the short scorpion toxin superfamily. Potassium channel inhibitor family. Alpha-KTx 12 subfamily. As to expression, expressed by the venom gland.

It localises to the secreted. Inhibits voltage-gated potassium channels. The chain is Potassium channel toxin alpha-KTx 12.7 from Lychas mucronatus (Chinese swimming scorpion).